A 174-amino-acid polypeptide reads, in one-letter code: Ribosome maturation factor RimP (174 aa).

Belongs to the RimP family.

Its subcellular location is the cytoplasm. Required for maturation of 30S ribosomal subunits. The polypeptide is Ribosome maturation factor RimP (Acinetobacter baumannii (strain SDF)).